The chain runs to 233 residues: Purine nucleoside phosphorylase DeoD-type (233 aa).

Residue His-4 participates in a purine D-ribonucleoside binding. Residues Gly-20, Arg-24, Arg-43, and 87 to 90 each bind phosphate; that span reads RVGT. A purine D-ribonucleoside contacts are provided by residues 178–180 and 202–203; these read EME and SD. The active-site Proton donor is Asp-203.

It belongs to the PNP/UDP phosphorylase family. Homohexamer; trimer of homodimers.

It carries out the reaction a purine D-ribonucleoside + phosphate = a purine nucleobase + alpha-D-ribose 1-phosphate. The enzyme catalyses a purine 2'-deoxy-D-ribonucleoside + phosphate = a purine nucleobase + 2-deoxy-alpha-D-ribose 1-phosphate. Its function is as follows. Catalyzes the reversible phosphorolytic breakdown of the N-glycosidic bond in the beta-(deoxy)ribonucleoside molecules, with the formation of the corresponding free purine bases and pentose-1-phosphate. The sequence is that of Purine nucleoside phosphorylase DeoD-type from Listeria innocua serovar 6a (strain ATCC BAA-680 / CLIP 11262).